A 617-amino-acid chain; its full sequence is Proline--tRNA ligase (617 aa).

The protein belongs to the class-II aminoacyl-tRNA synthetase family. ProS type 1 subfamily. Homodimer.

It localises to the cytoplasm. The catalysed reaction is tRNA(Pro) + L-proline + ATP = L-prolyl-tRNA(Pro) + AMP + diphosphate. In terms of biological role, catalyzes the attachment of proline to tRNA(Pro) in a two-step reaction: proline is first activated by ATP to form Pro-AMP and then transferred to the acceptor end of tRNA(Pro). As ProRS can inadvertently accommodate and process non-cognate amino acids such as alanine and cysteine, to avoid such errors it has two additional distinct editing activities against alanine. One activity is designated as 'pretransfer' editing and involves the tRNA(Pro)-independent hydrolysis of activated Ala-AMP. The other activity is designated 'posttransfer' editing and involves deacylation of mischarged Ala-tRNA(Pro). The misacylated Cys-tRNA(Pro) is not edited by ProRS. This Streptococcus pneumoniae serotype 4 (strain ATCC BAA-334 / TIGR4) protein is Proline--tRNA ligase.